A 113-amino-acid chain; its full sequence is Biotrophy-associated secreted protein 3 (113 aa).

The first 20 residues, M1–A20, serve as a signal peptide directing secretion.

It localises to the secreted. Secreted effector involved in biotrophic colonization of plant cells. In Pyricularia oryzae (strain 70-15 / ATCC MYA-4617 / FGSC 8958) (Rice blast fungus), this protein is Biotrophy-associated secreted protein 3.